The sequence spans 213 residues: NAD(P)H-hydrate epimerase (213 aa).

A YjeF N-terminal domain is found at 8-210 (MYNIEENGHA…KIGIPPEAEK (203 aa)). Residue 55–59 (NNGGD) coordinates (6S)-NADPHX. K(+) is bound by residues asparagine 56 and aspartate 122. Residues 126–132 (GTGITGE), tyrosine 137, and aspartate 155 each bind (6S)-NADPHX. Residue serine 158 participates in K(+) binding.

The protein belongs to the NnrE/AIBP family. The cofactor is K(+).

The catalysed reaction is (6R)-NADHX = (6S)-NADHX. It carries out the reaction (6R)-NADPHX = (6S)-NADPHX. Catalyzes the epimerization of the S- and R-forms of NAD(P)HX, a damaged form of NAD(P)H that is a result of enzymatic or heat-dependent hydration. This is a prerequisite for the S-specific NAD(P)H-hydrate dehydratase to allow the repair of both epimers of NAD(P)HX. In Cenarchaeum symbiosum (strain A), this protein is NAD(P)H-hydrate epimerase.